The primary structure comprises 117 residues: Membrane-anchored ubiquitin-fold protein 1 (117 aa).

The region spanning 8–74 (LEIKFRLTDG…LENSKTVKDY (67 aa)) is the Ubiquitin-like domain. Cysteine 112 carries S-palmitoyl cysteine lipidation. The residue at position 114 (cysteine 114) is a Cysteine methyl ester. Residue cysteine 114 is the site of S-farnesyl cysteine attachment. A propeptide spans 115–117 (SVM) (removed in mature form).

It localises to the cell membrane. May serve as docking site to facilitate the association of other proteins to the plasma membrane. The sequence is that of Membrane-anchored ubiquitin-fold protein 1 (MUB1) from Arabidopsis thaliana (Mouse-ear cress).